A 100-amino-acid polypeptide reads, in one-letter code: Urease subunit gamma (100 aa).

It belongs to the urease gamma subunit family. As to quaternary structure, heterotrimer of UreA (gamma), UreB (beta) and UreC (alpha) subunits. Three heterotrimers associate to form the active enzyme.

Its subcellular location is the cytoplasm. The catalysed reaction is urea + 2 H2O + H(+) = hydrogencarbonate + 2 NH4(+). It participates in nitrogen metabolism; urea degradation; CO(2) and NH(3) from urea (urease route): step 1/1. The protein is Urease subunit gamma of Frankia alni (strain DSM 45986 / CECT 9034 / ACN14a).